The following is a 986-amino-acid chain: Translation initiation factor IF-2 (986 aa).

Residues 49–59 show a composition bias toward basic and acidic residues; the sequence is EFAKDNAKGDS. Residues 49-370 form a disordered region; the sequence is EFAKDNAKGD…KNRLAKRHEY (322 aa). Residues 60–112 show a composition bias toward low complexity; the sequence is KPASSAQKPAAKPVQQRRPAAPSAPASTSSSAPTPAAPARQASPASAHQQAPT. Positions 135–168 are enriched in basic and acidic residues; it reads GQHDNRENGRDNREGRENGRQSRPNDRRNNDRRN. The span at 170–182 shows a compositional bias: low complexity; sequence QGRPNNGQPGQHQ. Gly residues-rich tracts occupy residues 254–286 and 296–353; these read GRGG…GGPR and GQGG…GRQG. Positions 357–366 are enriched in basic residues; that stretch reads SKARKNRLAK. The tr-type G domain maps to 479–651; sequence PRPPVVTVMG…VLLTADAELD (173 aa). The G1 stretch occupies residues 488–495; the sequence is GHVDHGKT. 488–495 is a binding site for GTP; that stretch reads GHVDHGKT. The tract at residues 513-517 is G2; it reads GITQR. The segment at 538-541 is G3; that stretch reads DTPG. GTP contacts are provided by residues 538 to 542 and 592 to 595; these read DTPGH and NKID. Residues 592–595 are G4; sequence NKID. Residues 628–630 are G5; it reads SAK.

It belongs to the TRAFAC class translation factor GTPase superfamily. Classic translation factor GTPase family. IF-2 subfamily.

The protein localises to the cytoplasm. In terms of biological role, one of the essential components for the initiation of protein synthesis. Protects formylmethionyl-tRNA from spontaneous hydrolysis and promotes its binding to the 30S ribosomal subunits. Also involved in the hydrolysis of GTP during the formation of the 70S ribosomal complex. This is Translation initiation factor IF-2 from Bifidobacterium longum subsp. infantis (strain ATCC 15697 / DSM 20088 / JCM 1222 / NCTC 11817 / S12).